The primary structure comprises 928 residues: Diacylglycerol kinase zeta (928 aa).

The segment covering 1–14 (MEPRDGSPEARSSD) has biased composition (basic and acidic residues). Disordered regions lie at residues 1–46 (MEPR…RRFP) and 59–82 (KSGLQHLAPPPPTPGAPCSESERQ). A compositionally biased stretch (low complexity) spans 15–24 (SESASASSSG). Positions 25–37 (SERDAGPEPDKAP) are enriched in basic and acidic residues. 2 Phorbol-ester/DAG-type zinc fingers span residues 98 to 152 (HIWF…NFRC) and 172 to 230 (HHWV…EEPC). The disordered stretch occupies residues 251–280 (PQNTLKASKKKKRASFKRKSSKKGPEEGRW). Residues 257–272 (ASKKKKRASFKRKSSK) show a composition bias toward basic residues. The tract at residues 259–273 (KKKKRASFKRKSSKK) is MARCKS homology. The segment at 278–416 (GRWRPFIIRP…HVEEGNVVQL (139 aa)) is mediates interaction with RASGRP1. The 135-residue stretch at 291–425 (PLMKPLLVFV…LDRWDLHAEP (135 aa)) folds into the DAGKc domain. Positions 361–369 (LSTLDQLRL) match the Nuclear export signal motif. S705 bears the Phosphoserine mark. A disordered region spans residues 759-788 (ARPDLPTPTSPLPTSPCSPTPRSLQGDAAP). Pro residues predominate over residues 763–777 (LPTPTSPLPTSPCSP). S781 carries the phosphoserine modification. 2 ANK repeats span residues 822-852 (QSRTLLHHAVSTGSKDVVRYLLDHAPPEILD) and 857-886 (NGETCLHQAAALGQRTICHYIVEAGASLMK). The PDZ-binding motif lies at 924-928 (QETAV).

Belongs to the eukaryotic diacylglycerol kinase family. As to quaternary structure, interacts (via PDZ-binding motif) with the PDZ domain of the syntrophin SNTG1 and that of SNX27. Interacts with IRS1 in the absence of insulin; insulin stimulation decreases this interaction. Found in a ternary complex with IRS1 and PIP5K1A in the absence of insulin. Interacts with PIP5K1A. Forms a signaling complex with RASGRP1 and HRAS. In terms of processing, phosphorylation of the MARCKS homology domain by PKC reduces nuclear accumulation of DGK-zeta. As to expression, highest levels in brain, and substantial levels in skeletal muscle, heart, and pancreas. In terms of tissue distribution, predominantly expressed in muscle.

It localises to the nucleus. Its subcellular location is the cytoplasm. The protein resides in the cytosol. The protein localises to the cell membrane. It is found in the cell projection. It localises to the lamellipodium. It catalyses the reaction a 1,2-diacyl-sn-glycerol + ATP = a 1,2-diacyl-sn-glycero-3-phosphate + ADP + H(+). The catalysed reaction is a 1-O-alkyl-sn-glycerol + ATP = a 1-O-alkyl-sn-glycero-3-phosphate + ADP + H(+). It carries out the reaction 1-O-alkyl-2-acyl-sn-glycerol + ATP = 1-O-alkyl-2-acyl-sn-glycero-3-phosphate + ADP + H(+). The enzyme catalyses 1,2-didecanoyl-sn-glycerol + ATP = 1,2-didecanoyl-sn-glycero-3-phosphate + ADP + H(+). It catalyses the reaction 1,2-ditetradecanoyl-sn-glycerol + ATP = 1,2-ditetradecanoyl-sn-glycero-3-phosphate + ADP + H(+). The catalysed reaction is 1-hexadecanoyl-2-(9Z-octadecenoyl)-sn-glycerol + ATP = 1-hexadecanoyl-2-(9Z-octadecenoyl)-sn-glycero-3-phosphate + ADP + H(+). It carries out the reaction 1-hexadecanoyl-2-(5Z,8Z,11Z,14Z-eicosatetraenoyl)-sn-glycerol + ATP = 1-hexadecanoyl-2-(5Z,8Z,11Z,14Z-eicosatetraenoyl)-sn-glycero-3-phosphate + ADP + H(+). The enzyme catalyses 1-octadecanoyl-2-(9Z-octadecenoyl)-sn-glycerol + ATP = 1-octadecanoyl-2-(9Z-octadecenoyl)-sn-glycero-3-phosphate + ADP + H(+). It catalyses the reaction 1-octadecanoyl-2-(5Z,8Z,11Z,14Z-eicosatetraenoyl)-sn-glycerol + ATP = 1-octadecanoyl-2-(5Z,8Z,11Z,14Z-eicosatetraenoyl)-sn-glycero-3-phosphate + ADP + H(+). The catalysed reaction is 1-octadecanoyl-2-(4Z,7Z,10Z,13Z,16Z,19Z-docosahexaenoyl)-sn-glycerol + ATP = 1-octadecanoyl-2-(4Z,7Z,10Z,13Z,16Z,19Z-docosahexaenoyl)-sn-glycero-3-phosphate + ADP + H(+). It carries out the reaction 1,2-di-(9Z-octadecenoyl)-sn-glycerol + ATP = 1,2-di-(9Z-octadecenoyl)-sn-glycero-3-phosphate + ADP + H(+). The enzyme catalyses 1-(9Z-octadecenoyl)-2-hexadecanoyl-sn-glycerol + ATP = 1-(9Z)-octadecenoyl-2-hexadecanoyl-sn-glycero-3-phosphate + ADP + H(+). It catalyses the reaction 1-eicosanoyl-2-(5Z,8Z,11Z,14Z)-eicosatetraenoyl-sn-glycerol + ATP = 1-eicosanoyl-2-(5Z,8Z,11Z,14Z)-eicosatetraenoyl-sn-glycero-3-phosphate + ADP + H(+). The catalysed reaction is 1,2-di-(5Z,8Z,11Z,14Z)-eicosatetraenoyl-sn-glycerol + ATP = 1,2-di-(5Z,8Z,11Z,14Z)-eicosatetraenoyl-sn-glycero-3-phosphate + ADP + H(+). It carries out the reaction 1-O-hexadecyl-2-acetyl-sn-glycerol + ATP = 1-O-hexadecyl-2-acetyl-sn-glycero-3-phosphate + ADP + H(+). The enzyme catalyses 1-O-hexadecyl-2-(5Z,8Z,11Z,14Z-eicosatetraenoyl)-sn-glycerol + ATP = 1-O-hexadecyl-2-(5Z,8Z,11Z,14Z-eicosatetraenoyl)-sn-glycero-3-phosphate + ADP + H(+). It catalyses the reaction 1-O-hexadecyl-2-(9Z-octadecenoyl)-sn-glycerol + ATP = 1-O-hexadecyl-2-(9Z-octadecenoyl)-sn-glycero-3-phosphate + ADP + H(+). The catalysed reaction is 1-O-hexadecyl-sn-glycerol + ATP = 1-O-hexadecyl-sn-glycero-3-phosphate + ADP + H(+). Its pathway is lipid metabolism; glycerolipid metabolism. Activated by 1,2-diacyl-sn-glycero-3-phosphate/phosphatidic acid irrespective of its acyl chain composition. In terms of biological role, diacylglycerol kinase that converts diacylglycerol/DAG into phosphatidic acid/phosphatidate/PA and regulates the respective levels of these two bioactive lipids. Thereby, acts as a central switch between the signaling pathways activated by these second messengers with different cellular targets and opposite effects in numerous biological processes. Also plays an important role in the biosynthesis of complex lipids. Does not exhibit an acyl chain-dependent substrate specificity among diacylglycerol species. Can also phosphorylate 1-alkyl-2-acylglycerol in vitro but less efficiently and with a preference for alkylacylglycerols containing an arachidonoyl group. The biological processes it is involved in include T cell activation since it negatively regulates T-cell receptor signaling which is in part mediated by diacylglycerol. By generating phosphatidic acid, stimulates PIP5KIA activity which regulates actin polymerization. Through the same mechanism could also positively regulate insulin-induced translocation of SLC2A4 to the cell membrane. Functionally, regulates RASGRP1 activity. Does not regulate RASGRP1 activity. The protein is Diacylglycerol kinase zeta of Homo sapiens (Human).